A 1330-amino-acid polypeptide reads, in one-letter code: Paired amphipathic helix protein Sin3-like 3 (1330 aa).

PAH domains follow at residues 8-78 (QKLT…LPKG) and 94-164 (KRVE…LPDT). The segment covering 191–246 (IITPHPDHDYGTEHIDQDRERPIKKENKEHMRGTNKENEHRDARDFEPHSKKEQFL) has biased composition (basic and acidic residues). Residues 191-281 (IITPHPDHDY…VPSSSTYDEK (91 aa)) form a disordered region. The span at 262–277 (ISNQSKLSGAVPSSST) shows a compositional bias: polar residues. One can recognise a PAH 3 domain in the interval 283–351 (AMKSYSQDLA…DSFIEFLVQC (69 aa)). Disordered regions lie at residues 373–401 (GEGK…DRDH), 718–775 (NQNV…GRTS), 789–808 (KNVV…SIER), 882–906 (QEMA…FEED), and 920–1002 (SKAN…EAEC). Positions 383–401 (DNDRDQEHKRDDGLRDRDH) are enriched in basic and acidic residues. A compositionally biased stretch (low complexity) spans 723–734 (SGSSSAGESEGS). The segment covering 789–800 (KNVVTSDEKPES) has biased composition (basic and acidic residues). Positions 920–932 (SKANDSTGNNISG) are enriched in polar residues. 2 stretches are compositionally biased toward basic and acidic residues: residues 933 to 949 (DRSR…RAEN) and 956 to 968 (NAAR…RNEY). Acidic residues predominate over residues 980 to 989 (GGEDPEDDLD). Ser-996 carries the post-translational modification Phosphoserine.

As to quaternary structure, interacts with ERF7 and the histone deacetylase HDA19.

Its subcellular location is the nucleus. Acts as a transcriptional repressor. Interacts with ERF7 to repress genes in abscisic acid and drought stress responses. The heterodimer represses transcription by tethering SNL3 to DNA. This Arabidopsis thaliana (Mouse-ear cress) protein is Paired amphipathic helix protein Sin3-like 3 (SNL3).